The following is an 83-amino-acid chain: U5-theraphotoxin-Hs1b 1 (83 aa).

The first 21 residues, 1-21 (MKTSMFLTLTGLVLLFVVCYA), serve as a signal peptide directing secretion. The propeptide occupies 22–49 (SESEEKEFPKELLSSIFAADSDFKEEER). Cystine bridges form between Cys51–Cys63, Cys56–Cys68, and Cys62–Cys75.

This sequence belongs to the neurotoxin 10 (Hwtx-1) family. 51 (Hntx-8) subfamily. Hntx-8 sub-subfamily. Expressed by the venom gland.

It is found in the secreted. In terms of biological role, weakly inhibits 5HT3A receptors and Kv1.3/KCNA3 voltage-gated potassium channels. Agglutinates erythrocytes. This Cyriopagopus schmidti (Chinese bird spider) protein is U5-theraphotoxin-Hs1b 1.